A 162-amino-acid polypeptide reads, in one-letter code: General odorant-binding protein 2 (162 aa).

Residues 1–18 (MTSKSCLLLVAMVTLTTS) form the signal peptide. 3 disulfides stabilise this stretch: Cys-40/Cys-75, Cys-71/Cys-129, and Cys-118/Cys-138.

The protein belongs to the PBP/GOBP family. As to expression, antenna.

Present in the aqueous fluid surrounding olfactory sensory dendrites and are thought to aid in the capture and transport of hydrophobic odorants into and through this fluid. This chain is General odorant-binding protein 2, found in Heliothis virescens (Tobacco budworm moth).